Reading from the N-terminus, the 326-residue chain is Aspartate carbamoyltransferase catalytic subunit (326 aa).

Carbamoyl phosphate is bound by residues R76 and T77. Residue K104 participates in L-aspartate binding. Carbamoyl phosphate is bound by residues R126, H156, and Q159. 2 residues coordinate L-aspartate: R189 and R244. Residues G285 and P286 each coordinate carbamoyl phosphate.

This sequence belongs to the aspartate/ornithine carbamoyltransferase superfamily. ATCase family. Heterododecamer (2C3:3R2) of six catalytic PyrB chains organized as two trimers (C3), and six regulatory PyrI chains organized as three dimers (R2).

The catalysed reaction is carbamoyl phosphate + L-aspartate = N-carbamoyl-L-aspartate + phosphate + H(+). It functions in the pathway pyrimidine metabolism; UMP biosynthesis via de novo pathway; (S)-dihydroorotate from bicarbonate: step 2/3. Catalyzes the condensation of carbamoyl phosphate and aspartate to form carbamoyl aspartate and inorganic phosphate, the committed step in the de novo pyrimidine nucleotide biosynthesis pathway. This chain is Aspartate carbamoyltransferase catalytic subunit, found in Polynucleobacter asymbioticus (strain DSM 18221 / CIP 109841 / QLW-P1DMWA-1) (Polynucleobacter necessarius subsp. asymbioticus).